The following is a 473-amino-acid chain: UDP-N-acetylmuramate--L-alanine ligase (473 aa).

112–118 (GTHGKTT) lines the ATP pocket.

Belongs to the MurCDEF family.

Its subcellular location is the cytoplasm. It carries out the reaction UDP-N-acetyl-alpha-D-muramate + L-alanine + ATP = UDP-N-acetyl-alpha-D-muramoyl-L-alanine + ADP + phosphate + H(+). Its pathway is cell wall biogenesis; peptidoglycan biosynthesis. Its function is as follows. Cell wall formation. In Nitrosomonas eutropha (strain DSM 101675 / C91 / Nm57), this protein is UDP-N-acetylmuramate--L-alanine ligase.